The following is a 423-amino-acid chain: Guanine nucleotide-binding protein subunit beta (423 aa).

7 WD repeats span residues 90-120 (GHNN…LIWD), 132-162 (LDSQ…TIYR), 179-208 (GHTC…ALWD), 220-256 (DHLG…YIWD), 268-298 (VNDS…NMYD), 348-377 (DNQG…VVWD), and 389-419 (GHGG…KIWS).

Belongs to the WD repeat G protein beta family. In terms of assembly, g proteins are composed of 3 units, alpha, beta and gamma. The beta-gamma subunit complex (STE4-STE18 complex) interacts with PLP1 and PLP2. Interacts with SYG1.

In terms of biological role, implicated in the a- and alpha-factor response pathway. The beta and gamma chains of the putative yeast mating response pathway G protein play a positive role in initiation of the mating response. The beta and gamma chains are required for the GTPase activity, for replacement of GDP by GTP, and for G protein-effector interaction. The protein is Guanine nucleotide-binding protein subunit beta (STE4) of Saccharomyces cerevisiae (strain ATCC 204508 / S288c) (Baker's yeast).